Consider the following 108-residue polypeptide: PTS system fructose-like EIIB component 1 (108 aa).

In terms of domain architecture, PTS EIIB type-2 spans 1–104 (MSKKLIALCA…IIKEIEEMIA (104 aa)). Cys-11 acts as the Phosphocysteine intermediate in catalysis. Residue Cys-11 is modified to Phosphocysteine; by EIIA.

The protein resides in the cytoplasm. The catalysed reaction is D-fructose(out) + N(pros)-phospho-L-histidyl-[protein] = D-fructose 1-phosphate(in) + L-histidyl-[protein]. The phosphoenolpyruvate-dependent sugar phosphotransferase system (sugar PTS), a major carbohydrate active transport system, catalyzes the phosphorylation of incoming sugar substrates concomitantly with their translocation across the cell membrane. The enzyme II FryABC PTS system is involved in fructose transport. The protein is PTS system fructose-like EIIB component 1 (fryB) of Escherichia coli O157:H7.